We begin with the raw amino-acid sequence, 311 residues long: Progestin and adipoQ receptor family member 3 (311 aa).

The tract at residues 1–20 is required for interaction with SREBF2; that stretch reads MHQKLLKSAHYIELGSYQYW. Residues 1-70 are Cytoplasmic-facing; it reads MHQKLLKSAH…KSLFILSNET (70 aa). The segment at 41–60 is required for interaction with SCAP; sequence KDNPYITDGYRAYLPSRLCI. A golgi targeting region spans residues 61–71; that stretch reads KSLFILSNETV. A helical membrane pass occupies residues 71–91; that stretch reads VNIWSHLLGFFLFFTLGIYDM. Over 92–104 the chain is Lumenal; it reads TSVLPSASASRED. A helical membrane pass occupies residues 105-125; sequence FVICSICLFCFQVCMLCSVGY. Residues 126-145 are Cytoplasmic-facing; the sequence is HLFSCHRSEKTCRRWMALDY. Residues 146–166 form a helical membrane-spanning segment; sequence AGISIGILGCYVSGVFYAFYC. The Lumenal portion of the chain corresponds to 167-172; sequence NNYWRQ. The chain crosses the membrane as a helical span at residues 173-193; sequence VYLITVLAMILAVFFAQIHPS. The Cytoplasmic segment spans residues 194-203; it reads YLTQQWQRLR. The chain crosses the membrane as a helical span at residues 204–224; sequence PIIFCSVSGYGVIPTLHWVWL. Over 225–235 the chain is Lumenal; that stretch reads NGGVSAPIVQD. Residues 236–256 form a helical membrane-spanning segment; the sequence is FAPRVIVMYVIALLAFLFYIS. Residues 257–275 are Cytoplasmic-facing; sequence KVPERYFPGQLNYLGSSHQ. A helical transmembrane segment spans residues 276–296; sequence IWHVLAVVMLYWWHQSTVYVM. The Lumenal portion of the chain corresponds to 297-311; it reads QYRHSKPCPDYVSHL. Residues 299–303 form a golgi targeting region; sequence RHSKP.

The protein belongs to the ADIPOR family. As to quaternary structure, interacts with SCAP and SREBF2; the interactions are direct, increase in low cholesterol conditions and tether SCAP:SREBP complex to the Golgi apparatus. Interaction with SCAP is mutually exclusive with INSIG1. In hepatocytes, interacts with PPARA and HUWE1; the interactions promote PPARA poylubiquitination and HUWE1-mediated degradation. In macrophages, interacts with PPARG and STUB1; the interactions promote PPARG poylubiquitination and STUB1-mediated degradation.

It is found in the golgi apparatus membrane. In terms of biological role, golgi-anchored protein which modulates its interactors acitivies by tethering them to the Golgi apparatus. Functions as a spatial regulator of RAF1 kinase by sequestrating it to the Golgi apparatus. Acts as a positive regulator of cholesterol biosynthesis by mediating the anchoring of the SCAP:SREBP complex in the Golgi apparatus, thereby promoting SCAP:SREBF2 complex formation, potentiating SREBF2 and SREBF1 processing and enhancing lipid synthesis. Also regulates PPARA and PPARG functions by mediating their interaction with E3 ubiquitin ligases, such as STUB1 or HUWE1, leading to their polyubiquitination and proteasome-mediated degradation. In Mus musculus (Mouse), this protein is Progestin and adipoQ receptor family member 3.